The primary structure comprises 467 residues: Hydroxyacid-oxoacid transhydrogenase, mitochondrial (467 aa).

N6-acetyllysine is present on Lys-445. Ser-452 carries the post-translational modification Phosphoserine.

It belongs to the iron-containing alcohol dehydrogenase family. Hydroxyacid-oxoacid transhydrogenase subfamily. In terms of tissue distribution, only expressed in adult liver.

It localises to the mitochondrion. The catalysed reaction is (S)-3-hydroxybutanoate + 2-oxoglutarate = (R)-2-hydroxyglutarate + acetoacetate. The enzyme catalyses 4-hydroxybutanoate + 2-oxoglutarate = (R)-2-hydroxyglutarate + succinate semialdehyde. In terms of biological role, catalyzes the cofactor-independent reversible oxidation of gamma-hydroxybutyrate (GHB) to succinic semialdehyde (SSA) coupled to reduction of 2-ketoglutarate (2-KG) to D-2-hydroxyglutarate (D-2-HG). D,L-3-hydroxyisobutyrate and L-3-hydroxybutyrate (L-3-OHB) are also substrates for HOT with 10-fold lower activities. The protein is Hydroxyacid-oxoacid transhydrogenase, mitochondrial (ADHFE1) of Homo sapiens (Human).